The following is a 157-amino-acid chain: Protein Smg homolog (157 aa).

This sequence belongs to the Smg family.

The chain is Protein Smg homolog from Shewanella sediminis (strain HAW-EB3).